The chain runs to 36 residues: MGIFHKLTFKTIQRRSGIMNDSLQNTDLISHFSHPF.

Functionally, required for translation of SpoIIID. The sequence is that of Protein usd (usd) from Bacillus subtilis (strain 168).